The primary structure comprises 209 residues: dITP/XTP pyrophosphatase (209 aa).

7 to 12 provides a ligand contact to substrate; it reads SSHGYK. Catalysis depends on D70, which acts as the Proton acceptor. Position 70 (D70) interacts with Mg(2+). Residues S71, 154–157, K177, and 182–183 each bind substrate; these read FGYD and HR.

This sequence belongs to the HAM1 NTPase family. As to quaternary structure, homodimer. Mg(2+) is required as a cofactor.

It catalyses the reaction XTP + H2O = XMP + diphosphate + H(+). The enzyme catalyses dITP + H2O = dIMP + diphosphate + H(+). It carries out the reaction ITP + H2O = IMP + diphosphate + H(+). Pyrophosphatase that catalyzes the hydrolysis of nucleoside triphosphates to their monophosphate derivatives, with a high preference for the non-canonical purine nucleotides XTP (xanthosine triphosphate), dITP (deoxyinosine triphosphate) and ITP. Seems to function as a house-cleaning enzyme that removes non-canonical purine nucleotides from the nucleotide pool, thus preventing their incorporation into DNA/RNA and avoiding chromosomal lesions. This chain is dITP/XTP pyrophosphatase, found in Chlamydia trachomatis serovar A (strain ATCC VR-571B / DSM 19440 / HAR-13).